The sequence spans 498 residues: ATP synthase subunit beta, chloroplastic (498 aa).

172–179 contributes to the ATP binding site; that stretch reads GGAGVGKT.

Belongs to the ATPase alpha/beta chains family. As to quaternary structure, F-type ATPases have 2 components, CF(1) - the catalytic core - and CF(0) - the membrane proton channel. CF(1) has five subunits: alpha(3), beta(3), gamma(1), delta(1), epsilon(1). CF(0) has four main subunits: a(1), b(1), b'(1) and c(9-12).

It is found in the plastid. The protein localises to the chloroplast thylakoid membrane. It carries out the reaction ATP + H2O + 4 H(+)(in) = ADP + phosphate + 5 H(+)(out). In terms of biological role, produces ATP from ADP in the presence of a proton gradient across the membrane. The catalytic sites are hosted primarily by the beta subunits. The polypeptide is ATP synthase subunit beta, chloroplastic (Daucus carota (Wild carrot)).